The chain runs to 316 residues: Coiled-coil domain-containing protein 42 (316 aa).

Coiled-coil stretches lie at residues 39–146 (SPSI…SAKL) and 178–232 (LVSM…DRAR).

Belongs to the CFAP73 family. As to quaternary structure, interacts with ODF1 and ODF2. Interacts with CCDC38. Interacts with CCDC146. Interacts with CFAP53.

It localises to the cytoplasm. Its subcellular location is the perinuclear region. The protein localises to the cytoskeleton. The protein resides in the cell projection. It is found in the cilium. It localises to the flagellum. Its subcellular location is the microtubule organizing center. The protein localises to the centrosome. Its function is as follows. Essential for male fertility. Required for sperm development. In Homo sapiens (Human), this protein is Coiled-coil domain-containing protein 42.